The chain runs to 72 residues: Translation initiation factor IF-1 (72 aa).

In terms of domain architecture, S1-like spans Ala-2 to Lys-72.

Belongs to the IF-1 family. In terms of assembly, component of the 30S ribosomal translation pre-initiation complex which assembles on the 30S ribosome in the order IF-2 and IF-3, IF-1 and N-formylmethionyl-tRNA(fMet); mRNA recruitment can occur at any time during PIC assembly.

It localises to the cytoplasm. One of the essential components for the initiation of protein synthesis. Stabilizes the binding of IF-2 and IF-3 on the 30S subunit to which N-formylmethionyl-tRNA(fMet) subsequently binds. Helps modulate mRNA selection, yielding the 30S pre-initiation complex (PIC). Upon addition of the 50S ribosomal subunit IF-1, IF-2 and IF-3 are released leaving the mature 70S translation initiation complex. The sequence is that of Translation initiation factor IF-1 from Lactococcus lactis subsp. lactis (strain IL1403) (Streptococcus lactis).